Here is a 113-residue protein sequence, read N- to C-terminus: uncharacterized protein (113 aa).

Positions 31 to 113 (SNNNNNNNNN…YSPTKFNLQY (83 aa)) are disordered. The span at 32–98 (NNNNNNNNNN…NNNNNNNNNN (67 aa)) shows a compositional bias: low complexity. Residues 99-113 (SSSFEYSPTKFNLQY) are compositionally biased toward polar residues.

This is an uncharacterized protein from Dictyostelium discoideum (Social amoeba).